Consider the following 301-residue polypeptide: Probable alpha-L-glutamate ligase (301 aa).

The ATP-grasp domain maps to 104-287; it reads LQLLSRKGIG…VADMIFEFIE (184 aa). ATP-binding positions include lysine 141, 178–179, aspartate 187, and 211–213; these read EF and RSN. Mg(2+) is bound by residues aspartate 248, glutamate 260, and asparagine 262. Residues aspartate 248, glutamate 260, and asparagine 262 each coordinate Mn(2+).

It belongs to the RimK family. The cofactor is Mg(2+). It depends on Mn(2+) as a cofactor.

This Vibrio atlanticus (strain LGP32) (Vibrio splendidus (strain Mel32)) protein is Probable alpha-L-glutamate ligase.